The primary structure comprises 1183 residues: MTSTGQDSSTRQRKSRHNPQSPLQDSSATLKRGGKKGAVPHSSPNLAEVKKKGKMKKLSQPAEEDLIVGLQGLDLNSETRVPVGTGLVFDEQLNDFHCLWDDSFPENPERLHAIKEQLILEGLLGRCVSFQARFAEKEELMLVHSLEYIDLMETTQYMNEGELRVLAGTYDSVYLHPNSYSCACLATGSVLRLVDAVMGAEIRNGMAVIRPPGHHAQRSLMDGYCMFNHLAVAARYAQKKHRIQRILIVDWDVHHGQGTQFIFDQDPSVLYFSIHRYEHGRFWPHLKASNWSTTGFGQGQGYTINVPWNQVSFCSHKLSLACFPRGSREMTDYYIAFLCLQVGMRDADYIAAFLHILLPVAFEFQPQLVLVAAGFDALHGDPKGEMSATPAGFAHLTHFLMGLAGGKLILSLEGGYNLHALAKGVSGSLHTLLGDPCPMLESPVAPCASAQTSISCTLEALEPFWEVLERSVEPQDEDEVEGDMLEDEEEEGHWEATALPMDTWPLLQNRTGLVYDERMMSHCNLWDNHHPETPQRILRIMCHLEEVGLAARCLILPARPALDSELLTCHSAEYVERLRATEKMKTRDLHREGANFESIYICPSTFACAQLATGAACRLVEAVLSGEVLNGIAIVRPPGHHAEPDAACGFCFFNSVAVAARHAQVIAGRALRILIVDWDVHHGNGTQHIFEEDPSVLYVSLHRYDRGTFFPMGDEGASSQVGRAAGTGFTVNVPWNGPRMGDADYLATWHRLVLPIAYEFNPELVLISAGFDAAQGDPLGGCQVTPEGYAHLTHLLMGLAGGRIILILEGGYNLTSISESMAACTHSLLGDPPPQLTSLRPPQSGALASISEVIQVHRKYWRSLRLMKMEDKEERSSSRLVIKKLPQSASPVSAKGMTTPKGKVLEAGMRKPTAALPTKESTLGQAKAKTAKALLAQGQSSEQAAKGTTLDLATSKDTVGGATTDQCASVAATENSANQTTSGEEASGETESFGTSPSSNASKQTTGASPLHGAAAQQSPELGLSSTLELSSEAQEVQESEEGLLGEAAGGQDMNSLMLTQGFGDFNTQDVFYAVTPLSWCPHLMAVCPIPAAGLDVSQPCKTCGSVQENWVCLTCYQVYCSRYVNAHMVCHHEASEHPLVLSCVDLSTWCYLCQAYVHHEDLQDVKNAAHQNKFGEGMPHLQ.

Residues 1–61 form a disordered region; the sequence is MTSTGQDSST…KGKMKKLSQP (61 aa). Residues 18–29 show a composition bias toward polar residues; sequence NPQSPLQDSSAT. A Phosphoserine modification is found at serine 21. The residue at position 32 (arginine 32) is an Omega-N-methylarginine. The Nuclear export signal motif lies at 66-75; the sequence is LIVGLQGLDL. Histone deacetylase stretches follow at residues 86-434 and 512-830; these read GLVF…TLLG and GLVY…SLLG. The active-site 1 is histidine 215. Catalysis depends on histidine 641, which acts as the 2. The interval 972-1042 is disordered; sequence ATENSANQTT…EAQEVQESEE (71 aa). Residues 980-996 show a composition bias toward low complexity; the sequence is TTSGEEASGETESFGTS. Threonine 990, threonine 995, and threonine 1005 each carry phosphothreonine. Polar residues predominate over residues 997-1008; that stretch reads PSSNASKQTTGA. Serine 1009 bears the Phosphoserine mark. Residues 1021–1035 are compositionally biased toward low complexity; the sequence is ELGLSSTLELSSEAQ. The UBP-type zinc-finger motif lies at 1079–1177; that stretch reads SWCPHLMAVC…NAAHQNKFGE (99 aa). The Zn(2+) site is built by cysteine 1081, histidine 1083, cysteine 1101, cysteine 1104, cysteine 1113, cysteine 1116, and cysteine 1121. Residues 1122–1124 are ubiquitin binding; sequence SRY. Zn(2+)-binding residues include histidine 1128, histidine 1132, histidine 1138, cysteine 1151, and cysteine 1154. The tract at residues 1150–1157 is ubiquitin binding; that stretch reads WCYLCQAY.

This sequence belongs to the histone deacetylase family. HD type 2 subfamily. As to quaternary structure, forms a trimeric complex in the nucleus consisting of BANP, HDAC6 and KHDRBS1/SAM68; HDAC6 keeps KHDRBS1 in a deacetylated state which inhibits the inclusion of CD44 alternate exons. The complex is disrupted by MAPK1/MAPK3-mediated phosphorylation of BANP which results in BANP export to the cytoplasm. This facilitates acetylation of KHDRBS1 and CD44 variant exon inclusion. Interacts with SIRT2 (via both phosphorylated, unphosphorylated, active or inactive forms); the interaction is necessary for the complex to interact with alpha-tubulin. Under proteasome impairment conditions, interacts with UBD via its histone deacetylase 1 and UBP-type zinc-finger regions. Interacts with BBIP1, CBFA2T3, CYLD, DDIT3/CHOP, ZMYND15, F-actin and HDAC11. Interacts with RIPOR2; this interaction occurs during early myogenic differentiation and prevents HDAC6 to deacetylate tubulin. Interacts with AURKA; AURKA-mediated phosphorylation of HDAC6 promotes deacetylation of alpha-tubulin. Interacts with DYSF; this interaction occurs during early myogenic differentiation. Interacts with TPPP; inhibiting the tubulin deacetylase activity of HDAC6. Interacts with DYNLL1. Interacts with ATP13A2; the interaction results in recruitment of HDAC6 to lysosomes to promote CTTN deacetylation. Interacts with CCDC141 (via the N-terminal region); inhibiting the deacetylase activity of HDAC6. Interacts with IPO7; the interaction facilitates HDAC6 nuclear translocation in dental papilla cells. It depends on Zn(2+) as a cofactor. Post-translationally, phosphorylated by AURKA; phosphorylation increases HDAC6-mediated deacetylation of alpha-tubulin and subsequent disassembly of cilia. Ubiquitinated. Its polyubiquitination however does not lead to its degradation. In terms of processing, sumoylated in vitro.

It is found in the cytoplasm. The protein localises to the cytoskeleton. It localises to the nucleus. The protein resides in the perikaryon. Its subcellular location is the cell projection. It is found in the dendrite. The protein localises to the axon. It localises to the cilium. The protein resides in the microtubule organizing center. Its subcellular location is the centrosome. It is found in the cilium basal body. It catalyses the reaction N(6)-acetyl-L-lysyl-[protein] + H2O = L-lysyl-[protein] + acetate. The catalysed reaction is N(6)-acetyl-L-lysyl-[alpha-tubulin] + H2O = L-lysyl-[alpha-tubulin] + acetate. The protein operates within protein modification; protein ubiquitination. Functionally, deacetylates a wide range of non-histone substrates. Plays a central role in microtubule-dependent cell motility by mediating deacetylation of tubulin. Required for cilia disassembly via deacetylation of alpha-tubulin. Alpha-tubulin deacetylation results in destabilization of dynamic microtubules. Promotes deacetylation of CTTN, leading to actin polymerization, promotion of autophagosome-lysosome fusion and completion of autophagy. Deacetylates SQSTM1. Deacetylates peroxiredoxins PRDX1 and PRDX2, decreasing their reducing activity. Deacetylates antiviral protein RIGI in the presence of viral mRNAs which is required for viral RNA detection by RIGI. Sequentially deacetylates and polyubiquitinates DNA mismatch repair protein MSH2 which leads to MSH2 degradation, reducing cellular sensitivity to DNA-damaging agents and decreasing cellular DNA mismatch repair activities. Deacetylates DNA mismatch repair protein MLH1 which prevents recruitment of the MutL alpha complex (formed by the MLH1-PMS2 heterodimer) to the MutS alpha complex (formed by the MSH2-MSH6 heterodimer), leading to tolerance of DNA damage. Deacetylates RHOT1/MIRO1 which blocks mitochondrial transport and mediates axon growth inhibition. Deacetylates transcription factor SP1 which leads to increased expression of ENG, positively regulating angiogenesis. Deacetylates KHDRBS1/SAM68 which regulates alternative splicing by inhibiting the inclusion of CD44 alternate exons. Promotes odontoblast differentiation following IPO7-mediated nuclear import and subsequent repression of RUNX2 expression. In addition to its protein deacetylase activity, plays a key role in the degradation of misfolded proteins: when misfolded proteins are too abundant to be degraded by the chaperone refolding system and the ubiquitin-proteasome, mediates the transport of misfolded proteins to a cytoplasmic juxtanuclear structure called aggresome. Probably acts as an adapter that recognizes polyubiquitinated misfolded proteins and targets them to the aggresome, facilitating their clearance by autophagy. The chain is Protein deacetylase HDAC6 from Rattus norvegicus (Rat).